The following is a 548-amino-acid chain: Glucan 1,4-alpha-maltotetraohydrolase (548 aa).

Residues 1 to 21 form the signal peptide; it reads MSHILRAAVLAAMLLPLPSMA. Residues Asp22, Gln23, His34, Asp37, and Glu38 each contribute to the Ca(2+) site. Position 99-100 (99-100) interacts with substrate; sequence YF. Asn137 is a Ca(2+) binding site. His138 serves as a coordination point for substrate. Cys161 and Cys171 are oxidised to a cystine. 2 residues coordinate Ca(2+): Asp172 and Asp175. 177–181 serves as a coordination point for substrate; sequence FIGGD. Residue Asp183 coordinates Ca(2+). Substrate is bound at residue Arg212. Catalysis depends on Asp214, which acts as the Nucleophile. 217–218 serves as a coordination point for substrate; it reads RG. Gly218 is a Ca(2+) binding site. A disulfide bridge links Cys237 with Cys272. Glu240 functions as the Proton donor in the catalytic mechanism. 2 residues coordinate substrate: His314 and Gln326. One can recognise a CBM20 domain in the interval 446-548; the sequence is GEPGALVSVS…SEGATTVGRL (103 aa). Residues 529 to 542 are compositionally biased toward polar residues; sequence QGGANNSLTPSEGA. A disordered region spans residues 529 to 548; sequence QGGANNSLTPSEGATTVGRL.

The protein belongs to the glycosyl hydrolase 13 family. As to quaternary structure, monomer. Requires Ca(2+) as cofactor.

The protein localises to the secreted. It catalyses the reaction Hydrolysis of (1-&gt;4)-alpha-D-glucosidic linkages in amylaceous polysaccharides, to remove successive maltotetraose residues from the non-reducing chain ends.. It participates in glycan degradation; starch degradation. The sequence is that of Glucan 1,4-alpha-maltotetraohydrolase (amyP) from Stutzerimonas stutzeri (Pseudomonas stutzeri).